Here is a 450-residue protein sequence, read N- to C-terminus: Signal recognition particle protein (450 aa).

GTP contacts are provided by residues 107-114, 190-194, and 248-251; these read GLQGVGKT, DTAGR, and TKTD.

The protein belongs to the GTP-binding SRP family. SRP54 subfamily. In terms of assembly, part of the signal recognition particle protein translocation system, which is composed of SRP and FtsY. SRP is a ribonucleoprotein composed of Ffh and a 4.5S RNA molecule.

It localises to the cytoplasm. The enzyme catalyses GTP + H2O = GDP + phosphate + H(+). Functionally, involved in targeting and insertion of nascent membrane proteins into the cytoplasmic membrane. Binds to the hydrophobic signal sequence of the ribosome-nascent chain (RNC) as it emerges from the ribosomes. The SRP-RNC complex is then targeted to the cytoplasmic membrane where it interacts with the SRP receptor FtsY. Interaction with FtsY leads to the transfer of the RNC complex to the Sec translocase for insertion into the membrane, the hydrolysis of GTP by both Ffh and FtsY, and the dissociation of the SRP-FtsY complex into the individual components. The polypeptide is Signal recognition particle protein (Buchnera aphidicola subsp. Schizaphis graminum (strain Sg)).